Consider the following 448-residue polypeptide: Arginine synthetase ArcE (448 aa).

In terms of assembly, probably forms homotetramers and higher assemblies of tetramers. Mg(2+) serves as cofactor.

It catalyses the reaction L-arginine + ADP + phosphate + H(+) = L-citrulline + NH4(+) + ATP. It functions in the pathway amino-acid biosynthesis; L-proline biosynthesis. Its pathway is amino-acid degradation; L-arginine degradation. It participates in amino-acid biosynthesis; L-arginine biosynthesis. Arginine deiminase involved in an arginine synthetase pathway, which provides citrulline and ornithine, the precursors for proline biosynthesis. Catalyzes the conversion of L-arginine to citrulline while conserving the energy of arginine deimination to generate ATP from ADP and free phosphate. Is specific toward L-arginine and cannot use D-arginine, agmatine, guanidine, L-alanine-L-arginine dipeptide and L-arginine-L-alanine dipeptide. Can also use CDP, GDP or UDP, with lower activity (38%, 8.4% and 13.3%, respectively). The enzyme can also catalyze the reverse reaction: the ATP-dependent generation of arginine from citrulline in a single reaction by using free ammonia, without the requirement of aspartic acid. In vivo, most likely functions in the arginine catabolism to produce citrulline for proline biosynthesis while also generating ATP, but it can also contribute to arginine biosynthesis when the necessary precursors such as citrulline are abundant. The sequence is that of Arginine synthetase ArcE from Thermococcus kodakarensis (strain ATCC BAA-918 / JCM 12380 / KOD1) (Pyrococcus kodakaraensis (strain KOD1)).